A 606-amino-acid polypeptide reads, in one-letter code: MDSQRELAEELRLYQSTLLQDGLKDLLDEKKFIDCTLKAGDKSLPCHRLILSACSPYFREYFLSEIDEAKKKEVVLDNVDPAILDLIIKYLYSASIDLNDGNVQDIFALASRFQIPSVFTVCVSYLQKRLAPGNCLAILRLGLLLDCPRLAISAREFVSDRFVQICKEEDFMQLSPQELISVISNDSLNVEKEEAVFEAVMKWVRTDKENRVKNLSEVFDCIRFRLMTEKYFKDHVEKDDIIKSNPDLQKKIKVLKDAFAGKLPEPSKNAAKTGAGEVNGDVGDEDLLPGYLNDIPRHGMFVKDLILLVNDTAAVAYDPTENECYLTALAEQIPRNHSSIVTQQNQIYVVGGLYVDEENKDQPLQSYFFQLDSIASEWVGLPPLPSARCLFGLGEVDDKIYVVAGKDLQTEASLDSVLCYDPVAAKWNEVKKLPIKVYGHNVISHKGMIYCLGGKTDDKKCTNRVFIFNPKKGDWKDLAPMKIPRSMFGVAVHKGKIVIAGGVTEDGLSASVEAFDLTTNKWDVMTEFPQERSSISLVSLAGSLYAIGGFAMIQLESKEFAPTEVNDIWKYEDDKKEWAGMLKEIRYASGASCLATRLNLFKLSKL.

S3 carries the phosphoserine modification. One can recognise a BTB domain in the interval 33–100 (IDCTLKAGDK…LYSASIDLND (68 aa)). The BACK domain maps to 135–237 (CLAILRLGLL…TEKYFKDHVE (103 aa)). Kelch repeat units lie at residues 346–398 (QIYV…EVDD), 399–447 (KIYV…SHKG), 448–495 (MIYC…VHKG), 497–542 (IVIA…SLAG), and 544–599 (LYAI…TRLN).

Interacts with NRAP. Interacts with LASP1. Part of a complex that contains CUL3, RBX1 and KLHL41. Ubiquitinated by E3 ubiquitin ligase complex formed by CUL3 and RBX1 and probably targeted for proteasome-independent degradation. Quinone-induced oxidative stress increases its ubiquitination. In terms of tissue distribution, sarcomeric muscle.

It is found in the cytoplasm. The protein localises to the cytoskeleton. Its subcellular location is the cell projection. It localises to the pseudopodium. The protein resides in the ruffle. It is found in the myofibril. The protein localises to the sarcomere. Its subcellular location is the m line. It localises to the sarcoplasmic reticulum membrane. The protein resides in the endoplasmic reticulum membrane. Its function is as follows. Involved in skeletal muscle development and differentiation. Regulates proliferation and differentiation of myoblasts and plays a role in myofibril assembly by promoting lateral fusion of adjacent thin fibrils into mature, wide myofibrils. Required for pseudopod elongation in transformed cells. The chain is Kelch-like protein 41 (KLHL41) from Homo sapiens (Human).